Consider the following 739-residue polypeptide: Phosphoribosylformylglycinamidine synthase subunit PurL (739 aa).

Residue His54 is part of the active site. ATP contacts are provided by Tyr57 and Lys96. Glu98 serves as a coordination point for Mg(2+). Substrate contacts are provided by residues 99 to 102 (SHNH) and Arg121. Catalysis depends on His100, which acts as the Proton acceptor. A Mg(2+)-binding site is contributed by Asp122. Residue Gln245 participates in substrate binding. Asp273 serves as a coordination point for Mg(2+). Residue 317-319 (ESQ) participates in substrate binding. ATP contacts are provided by Asp500 and Gly537. Residue Asn538 coordinates Mg(2+). Ser540 is a binding site for substrate.

It belongs to the FGAMS family. In terms of assembly, monomer. Part of the FGAM synthase complex composed of 1 PurL, 1 PurQ and 2 PurS subunits.

Its subcellular location is the cytoplasm. It carries out the reaction N(2)-formyl-N(1)-(5-phospho-beta-D-ribosyl)glycinamide + L-glutamine + ATP + H2O = 2-formamido-N(1)-(5-O-phospho-beta-D-ribosyl)acetamidine + L-glutamate + ADP + phosphate + H(+). It functions in the pathway purine metabolism; IMP biosynthesis via de novo pathway; 5-amino-1-(5-phospho-D-ribosyl)imidazole from N(2)-formyl-N(1)-(5-phospho-D-ribosyl)glycinamide: step 1/2. Part of the phosphoribosylformylglycinamidine synthase complex involved in the purines biosynthetic pathway. Catalyzes the ATP-dependent conversion of formylglycinamide ribonucleotide (FGAR) and glutamine to yield formylglycinamidine ribonucleotide (FGAM) and glutamate. The FGAM synthase complex is composed of three subunits. PurQ produces an ammonia molecule by converting glutamine to glutamate. PurL transfers the ammonia molecule to FGAR to form FGAM in an ATP-dependent manner. PurS interacts with PurQ and PurL and is thought to assist in the transfer of the ammonia molecule from PurQ to PurL. The protein is Phosphoribosylformylglycinamidine synthase subunit PurL of Bacillus cereus (strain AH187).